The following is a 345-amino-acid chain: Phosphoribosylformylglycinamidine cyclo-ligase (345 aa).

This sequence belongs to the AIR synthase family.

The protein localises to the cytoplasm. It catalyses the reaction 2-formamido-N(1)-(5-O-phospho-beta-D-ribosyl)acetamidine + ATP = 5-amino-1-(5-phospho-beta-D-ribosyl)imidazole + ADP + phosphate + H(+). It participates in purine metabolism; IMP biosynthesis via de novo pathway; 5-amino-1-(5-phospho-D-ribosyl)imidazole from N(2)-formyl-N(1)-(5-phospho-D-ribosyl)glycinamide: step 2/2. This chain is Phosphoribosylformylglycinamidine cyclo-ligase, found in Actinobacillus succinogenes (strain ATCC 55618 / DSM 22257 / CCUG 43843 / 130Z).